A 365-amino-acid polypeptide reads, in one-letter code: Cobalt-precorrin-5B C(1)-methyltransferase (365 aa).

It belongs to the CbiD family.

It carries out the reaction Co-precorrin-5B + S-adenosyl-L-methionine = Co-precorrin-6A + S-adenosyl-L-homocysteine. It participates in cofactor biosynthesis; adenosylcobalamin biosynthesis; cob(II)yrinate a,c-diamide from sirohydrochlorin (anaerobic route): step 6/10. In terms of biological role, catalyzes the methylation of C-1 in cobalt-precorrin-5B to form cobalt-precorrin-6A. The protein is Cobalt-precorrin-5B C(1)-methyltransferase of Moorella thermoacetica (strain ATCC 39073 / JCM 9320).